The following is a 526-amino-acid chain: Na(+)/H(+) antiporter NhaB (526 aa).

12 helical membrane-spanning segments follow: residues 25-45, 52-72, 89-109, 130-164, 204-224, 242-262, 307-327, 350-370, 391-411, 448-468, 479-499, and 505-525; these read ILLF…IAGW, IFTL…LLAI, LVAN…IYFM, LSLA…FYAI, LMMH…VGEP, IRMS…CVLV, IALW…LIGL, QEAL…AVII, LALF…VFVG, VATP…LAPL, MALP…EMLL, and WFYQ…LPVL.

Belongs to the NhaB Na(+)/H(+) (TC 2.A.34) antiporter family.

It localises to the cell inner membrane. The catalysed reaction is 2 Na(+)(in) + 3 H(+)(out) = 2 Na(+)(out) + 3 H(+)(in). Na(+)/H(+) antiporter that extrudes sodium in exchange for external protons. This is Na(+)/H(+) antiporter NhaB from Aeromonas hydrophila subsp. hydrophila (strain ATCC 7966 / DSM 30187 / BCRC 13018 / CCUG 14551 / JCM 1027 / KCTC 2358 / NCIMB 9240 / NCTC 8049).